Consider the following 430-residue polypeptide: Probable sugar isomerase R00627 (430 aa).

Mn(2+) contacts are provided by His-257, Asp-289, and Asp-291.

It belongs to the rhamnose isomerase family. Mn(2+) serves as cofactor.

The sequence is that of Probable sugar isomerase R00627 from Rhizobium meliloti (strain 1021) (Ensifer meliloti).